The sequence spans 562 residues: Potassium-transporting ATPase potassium-binding subunit (562 aa).

12 helical membrane-spanning segments follow: residues 6–26 (FLLIASFMLVLFVLSRPLGGF), 62–82 (YALAILCFNLLGIVLLFVLLM), 132–152 (GLTVQNFLSAATGIAVAFALI), 175–195 (LYVLLPIALIIALIFVSQGVL), 253–273 (FVQMLAIFLIPCALCFAFGQV), 283–303 (LIWAMSLIFIVAVVVVMYAEL), 327–347 (FGILATSLYAVVTTAASCGAV), 356–376 (ALGGMIPLWLMQIGEVVFGGV), 379–399 (GLYGMLLFVLLTVFIAGLMIG), 416–436 (MTALAILVTPTIVLLGTALAL), 483–503 (LLLAAAMFIGRFGVILPVLAI), and 526–546 (LFIGLLIGTVLLVGALTFIPA).

It belongs to the KdpA family. As to quaternary structure, the system is composed of three essential subunits: KdpA, KdpB and KdpC.

The protein localises to the cell inner membrane. Part of the high-affinity ATP-driven potassium transport (or Kdp) system, which catalyzes the hydrolysis of ATP coupled with the electrogenic transport of potassium into the cytoplasm. This subunit binds the periplasmic potassium ions and delivers the ions to the membrane domain of KdpB through an intramembrane tunnel. The polypeptide is Potassium-transporting ATPase potassium-binding subunit (Yersinia pseudotuberculosis serotype I (strain IP32953)).